The primary structure comprises 176 residues: Flavodoxin 1 (176 aa).

The Flavodoxin-like domain occupies 4–165 (HGIFFGSDTG…RVEKWVKQIS (162 aa)).

It belongs to the flavodoxin family. FMN serves as cofactor.

In terms of biological role, low-potential electron donor to a number of redox enzymes. The protein is Flavodoxin 1 (fldA) of Shigella flexneri.